Here is a 308-residue protein sequence, read N- to C-terminus: GTP-binding protein RAD (308 aa).

Residues 1-15 (MTLNGGSGASGSRGA) show a composition bias toward gly residues. The segment at 1–86 (MTLNGGSGAS…SDSLSSGGSG (86 aa)) is disordered. An Omega-N-methylarginine modification is found at Arg24. Position 26 is a phosphoserine (Ser26). The span at 57-82 (ATTAAGTRTQGQRLDWPEGSSDSLSS) shows a compositional bias: low complexity. Residues 98–105 (GAPGVGKS) and 203–206 (NKSD) contribute to the GTP site. Positions 278 to 297 (AKRFLGRIVARNSRKMAFRA) are calmodulin-binding.

Belongs to the small GTPase superfamily. RGK family. As to quaternary structure, interacts with Calmodulin preferentially in the inactive, GDP-bound form. Interacts with CAMK2D. Interacts with CACNB2; interaction may be involved in beta-adrenergic regulation of heart rate and contractile force. Interaction with CACNB2 regulates the trafficking of CACNA1C to the cell membrane. Phosphorylation at Ser-26, Ser-39, Ser-273 and Ser-301 may be involved in regulating inhibition of voltage-gated L-type Ca(2+) channels.

Its subcellular location is the cell membrane. Its function is as follows. May regulate basal voltage-dependent L-type Ca(2+) currents and be required for beta-adrenergic augmentation of Ca(2+) influx in cardiomyocytes, thereby regulating increases in heart rate and contractile force. May play an important role in cardiac antiarrhythmia via the strong suppression of voltage-dependent L-type Ca(2+) currents. Regulates voltage-gated L-type calcium channel subunit alpha-1C trafficking to the cell membrane. Inhibits cardiac hypertrophy through the calmodulin-dependent kinase II (CaMKII) pathway. Inhibits phosphorylation and activation of CAMK2D. This chain is GTP-binding protein RAD (Rrad), found in Mus musculus (Mouse).